Consider the following 489-residue polypeptide: UDP-N-acetylmuramoyl-L-alanyl-D-glutamate--2,6-diaminopimelate ligase (489 aa).

Ser30 provides a ligand contact to UDP-N-acetyl-alpha-D-muramoyl-L-alanyl-D-glutamate. 113 to 119 (GTNGKTS) is an ATP binding site. UDP-N-acetyl-alpha-D-muramoyl-L-alanyl-D-glutamate is bound by residues 155–156 (TT), Ser182, Gln188, and Arg190. Position 222 is an N6-carboxylysine (Lys222). Meso-2,6-diaminopimelate-binding positions include Arg388, 412 to 415 (DNPR), Gly463, and Glu467. A Meso-diaminopimelate recognition motif motif is present at residues 412 to 415 (DNPR).

This sequence belongs to the MurCDEF family. MurE subfamily. Mg(2+) serves as cofactor. Post-translationally, carboxylation is probably crucial for Mg(2+) binding and, consequently, for the gamma-phosphate positioning of ATP.

It localises to the cytoplasm. It catalyses the reaction UDP-N-acetyl-alpha-D-muramoyl-L-alanyl-D-glutamate + meso-2,6-diaminopimelate + ATP = UDP-N-acetyl-alpha-D-muramoyl-L-alanyl-gamma-D-glutamyl-meso-2,6-diaminopimelate + ADP + phosphate + H(+). The protein operates within cell wall biogenesis; peptidoglycan biosynthesis. Its function is as follows. Catalyzes the addition of meso-diaminopimelic acid to the nucleotide precursor UDP-N-acetylmuramoyl-L-alanyl-D-glutamate (UMAG) in the biosynthesis of bacterial cell-wall peptidoglycan. The chain is UDP-N-acetylmuramoyl-L-alanyl-D-glutamate--2,6-diaminopimelate ligase from Coxiella burnetii (strain RSA 493 / Nine Mile phase I).